The primary structure comprises 465 residues: GTPase Der (465 aa).

2 EngA-type G domains span residues 27-190 (PVLA…PEAP) and 202-375 (RRIA…AGWE). GTP-binding positions include 33-40 (GRPNVGKS), 80-84 (DTGGW), 142-145 (NKVD), 208-215 (GRPNVGKS), 255-259 (DTAGI), and 320-323 (NKWD). The 83-residue stretch at 376–458 (TRVPTGRLNA…PIHISVRVRE (83 aa)) folds into the KH-like domain.

This sequence belongs to the TRAFAC class TrmE-Era-EngA-EngB-Septin-like GTPase superfamily. EngA (Der) GTPase family. As to quaternary structure, associates with the 50S ribosomal subunit.

GTPase that plays an essential role in the late steps of ribosome biogenesis. This Streptomyces coelicolor (strain ATCC BAA-471 / A3(2) / M145) protein is GTPase Der.